The primary structure comprises 850 residues: Trimethylamine-N-oxide reductase (850 aa).

The segment at residues Met-1–Ala-39 is a signal peptide (tat-type signal). A Mo-bis(molybdopterin guanine dinucleotide)-binding site is contributed by Ser-191.

It belongs to the prokaryotic molybdopterin-containing oxidoreductase family. Requires Mo-bis(molybdopterin guanine dinucleotide) as cofactor. Post-translationally, predicted to be exported by the Tat system. The position of the signal peptide cleavage has not been experimentally proven.

It localises to the periplasm. The catalysed reaction is trimethylamine + 2 Fe(III)-[cytochrome c] + H2O = trimethylamine N-oxide + 2 Fe(II)-[cytochrome c] + 3 H(+). In terms of biological role, reduces trimethylamine-N-oxide (TMAO) into trimethylamine; an anaerobic reaction coupled to energy-yielding reactions. The polypeptide is Trimethylamine-N-oxide reductase (torA) (Salmonella typhi).